The following is a 422-amino-acid chain: MGLSRFNQDATCFVTSSEGNSVTIYNCDPFGKCFEMVDEDTQNIGDDDARGDDNSGGDDDLLVEMLFSTNLVAIVHRKQGILKSKKLKIVNIKRKTIICELSFPHPIQDVVMNRKRVCVLLNSDQIHIYDISCMKHLHTIDIWDSQVKSITGQGVDSLSNSGTSNMTSLRERSSTFSKSISPKICLSNDDRSILAFNCYSTSSKSVILNDVVIFDALNISPLNYINSVHKGNVASLAISPDGKFIATASEKGTLVRIFNTGAETESELLTPLLYEFRRGNRPCNINQLTFNSDSTLLGCVGDSDTIHIFKLDSTSRLLSMSVNSEDNSHITSEDIKALRKDPNSKQFTKLISKTIKKSIPSQALRRDFAHITIKNTKTKHILGFPKEFMNQVYVLSNDGSFFIYSLPSTSGSCVLSKQNDFK.

WD repeat units lie at residues 1-35 (MGLSRFNQDATCFVTSSEGNSVTIYNCDPFGKCFE), 102-153 (SFPH…ITGQ), 166-206 (MTSL…SKSV), 228-268 (VHKG…ESEL), 280-319 (NRPCNINQLTFNSDSTLLGCVGDSDTIHIFKLDSTSRLLS), and 374-414 (KNTK…GSCV). Positions 276–280 (FRRGN) match the L/FRRG motif motif.

Belongs to the WD repeat PROPPIN family.

It is found in the cytoplasm. The protein resides in the membrane. The protein localises to the vacuole membrane. In terms of biological role, required for cytoplasm to vacuole transport (Cvt) vesicles formation and mitophagy. Involved in binding of phosphatidylethanolamine to ATG8 and in recruitment of ATG8 and ATG5 to the pre-autophagosomal structure. Protects ATG8 from ARG4-mediated cleavage. This chain is Autophagy-related protein 21 (ATG21), found in Vanderwaltozyma polyspora (strain ATCC 22028 / DSM 70294 / BCRC 21397 / CBS 2163 / NBRC 10782 / NRRL Y-8283 / UCD 57-17) (Kluyveromyces polysporus).